We begin with the raw amino-acid sequence, 125 residues long: Holo-[acyl-carrier-protein] synthase (125 aa).

Positions 8 and 57 each coordinate Mg(2+).

This sequence belongs to the P-Pant transferase superfamily. AcpS family. It depends on Mg(2+) as a cofactor.

It localises to the cytoplasm. The catalysed reaction is apo-[ACP] + CoA = holo-[ACP] + adenosine 3',5'-bisphosphate + H(+). In terms of biological role, transfers the 4'-phosphopantetheine moiety from coenzyme A to a Ser of acyl-carrier-protein. This Nitrosospira multiformis (strain ATCC 25196 / NCIMB 11849 / C 71) protein is Holo-[acyl-carrier-protein] synthase.